Here is a 517-residue protein sequence, read N- to C-terminus: Ribonuclease Y (517 aa).

A helical membrane pass occupies residues 1–21; it reads MIESLIALIAAIVGLGIGYLV. A KH domain is found at 207-273; sequence LINVINIKND…TKVIELLVED (67 aa). The region spanning 333–426 is the HD domain; the sequence is ALAHSLEVAH…VCAADTLSAA (94 aa).

This sequence belongs to the RNase Y family.

It localises to the cell membrane. Endoribonuclease that initiates mRNA decay. In Campylobacter jejuni subsp. jejuni serotype O:6 (strain 81116 / NCTC 11828), this protein is Ribonuclease Y.